Consider the following 81-residue polypeptide: MATSKSGGSSKNGRDSISKRLGVKRSGGQFVRAGEIIIRQRGTKFHKGKNSGLGRDHTIFALKDGIVEFKTSKGRKYINII.

Over residues 1 to 11 the composition is skewed to polar residues; the sequence is MATSKSGGSSK. Residues 1 to 24 form a disordered region; that stretch reads MATSKSGGSSKNGRDSISKRLGVK.

It belongs to the bacterial ribosomal protein bL27 family.

The protein is Large ribosomal subunit protein bL27 of Borrelia duttonii (strain Ly).